The sequence spans 701 residues: Polyribonucleotide nucleotidyltransferase (701 aa).

Asp490 and Asp496 together coordinate Mg(2+). The region spanning Pro557 to Ile616 is the KH domain. The region spanning Gly626–Lys694 is the S1 motif domain.

Belongs to the polyribonucleotide nucleotidyltransferase family. Mg(2+) serves as cofactor.

The protein resides in the cytoplasm. The enzyme catalyses RNA(n+1) + phosphate = RNA(n) + a ribonucleoside 5'-diphosphate. In terms of biological role, involved in mRNA degradation. Catalyzes the phosphorolysis of single-stranded polyribonucleotides processively in the 3'- to 5'-direction. The protein is Polyribonucleotide nucleotidyltransferase of Staphylococcus epidermidis (strain ATCC 12228 / FDA PCI 1200).